Here is a 432-residue protein sequence, read N- to C-terminus: Homogentisate 1,2-dioxygenase (432 aa).

His-286 functions as the Proton acceptor in the catalytic mechanism. Fe cation contacts are provided by His-329 and Glu-335. Residues Tyr-344 and His-365 each contribute to the homogentisate site. Position 365 (His-365) interacts with Fe cation.

This sequence belongs to the homogentisate dioxygenase family. In terms of assembly, hexamer; dimer of trimers. Fe cation is required as a cofactor.

The enzyme catalyses homogentisate + O2 = 4-maleylacetoacetate + H(+). It functions in the pathway amino-acid degradation; L-phenylalanine degradation; acetoacetate and fumarate from L-phenylalanine: step 4/6. In terms of biological role, involved in the catabolism of homogentisate (2,5-dihydroxyphenylacetate or 2,5-OH-PhAc), a central intermediate in the degradation of phenylalanine and tyrosine. Catalyzes the oxidative ring cleavage of the aromatic ring of homogentisate to yield maleylacetoacetate. The polypeptide is Homogentisate 1,2-dioxygenase (Bordetella pertussis (strain Tohama I / ATCC BAA-589 / NCTC 13251)).